We begin with the raw amino-acid sequence, 256 residues long: Alcohol dehydrogenase (256 aa).

12–35 (FVAGLGGIGLDTSREIVKAGPKNL) is an NAD(+) binding site. S140 is a substrate binding site. The Proton acceptor role is filled by Y153.

Belongs to the short-chain dehydrogenases/reductases (SDR) family. As to quaternary structure, homodimer.

It carries out the reaction a primary alcohol + NAD(+) = an aldehyde + NADH + H(+). The enzyme catalyses a secondary alcohol + NAD(+) = a ketone + NADH + H(+). The polypeptide is Alcohol dehydrogenase (Adh) (Zaprionus tuberculatus (Vinegar fly)).